Here is a 359-residue protein sequence, read N- to C-terminus: Guanine nucleotide-binding protein G(q) subunit alpha (359 aa).

Residues Cys-9 and Cys-10 are each lipidated (S-palmitoyl cysteine). The G-alpha domain maps to 38–359 (RELKLLLLGT…QLNLKEYNLV (322 aa)). The G1 motif stretch occupies residues 41–54 (KLLLLGTGESGKST). GTP is bound by residues Ser-50, Gly-51, Lys-52, Ser-53, Thr-54, Ser-156, Leu-180, Arg-181, and Arg-183. Ser-53 serves as a coordination point for Mg(2+). Residues 178-186 (DVLRVRVPT) form a G2 motif region. Thr-186 contributes to the Mg(2+) binding site. The segment at 201–210 (FRMVDVGGQR) is G3 motif. Gln-209 carries the post-translational modification 5-glutamyl histamine. The G4 motif stretch occupies residues 270-277 (ILFLNKKD). GTP-binding residues include Asn-274, Lys-275, Asp-277, and Ala-331. Positions 329–334 (TCATDT) are G5 motif.

The protein belongs to the G-alpha family. G(q) subfamily. G proteins are composed of 3 units; alpha, beta and gamma. The alpha chain contains the guanine nucleotide binding site. Interacts (GDP-bound form) with RIC8A (via C-terminus); promoting GNAQ folding and association with the plasma membrane. Binds NHERF1. Forms a complex with PECAM1 and BDKRB2. Interacts with GAS2L2. Post-translationally, palmitoylated by ZDHHC3 and ZDHHC7. Palmitoylation occurs in the Golgi and participates in the localization of GNAQ to the plasma membrane. In terms of processing, histaminylated at Gln-209 residues by TGM2.

It is found in the cell membrane. The protein localises to the golgi apparatus. It localises to the nucleus. The protein resides in the nucleus membrane. It catalyses the reaction GTP + H2O = GDP + phosphate + H(+). Guanine nucleotide-binding proteins (G proteins) function as transducers downstream of G protein-coupled receptors (GPCRs) in numerous signaling cascades. The alpha chain contains the guanine nucleotide binding site and alternates between an active, GTP-bound state and an inactive, GDP-bound state. Signaling by an activated GPCR promotes GDP release and GTP binding. The alpha subunit has a low GTPase activity that converts bound GTP to GDP, thereby terminating the signal. Both GDP release and GTP hydrolysis are modulated by numerous regulatory proteins. Signaling is mediated via phospholipase C-beta-dependent inositol lipid hydrolysis for signal propagation: activates phospholipase C-beta: following GPCR activation, GNAQ activates PLC-beta (PLCB1, PLCB2, PLCB3 or PLCB4), leading to production of diacylglycerol (DAG) and inositol 1,4,5-trisphosphate (IP3). Required for platelet activation. Regulates B-cell selection and survival and is required to prevent B-cell-dependent autoimmunity. Regulates chemotaxis of BM-derived neutrophils and dendritic cells (in vitro). Transduces FFAR4 signaling in response to long-chain fatty acids (LCFAs). Together with GNA11, required for heart development. The protein is Guanine nucleotide-binding protein G(q) subunit alpha (Gnaq) of Rattus norvegicus (Rat).